The primary structure comprises 332 residues: Ketol-acid reductoisomerase (NADP(+)) (332 aa).

The KARI N-terminal Rossmann domain maps to 2-182 (AKIYTDKDVS…GATRAGVIET (181 aa)). NADP(+) contacts are provided by residues 25-28 (YGSQ), Ser-53, and 83-86 (DMIQ). The active site involves His-108. Gly-134 lines the NADP(+) pocket. The KARI C-terminal knotted domain occupies 183–328 (TFKEETETDL…RSLRDIILRG (146 aa)). Positions 191, 195, 227, and 231 each coordinate Mg(2+). Ser-252 contacts substrate.

This sequence belongs to the ketol-acid reductoisomerase family. The cofactor is Mg(2+).

The catalysed reaction is (2R)-2,3-dihydroxy-3-methylbutanoate + NADP(+) = (2S)-2-acetolactate + NADPH + H(+). It carries out the reaction (2R,3R)-2,3-dihydroxy-3-methylpentanoate + NADP(+) = (S)-2-ethyl-2-hydroxy-3-oxobutanoate + NADPH + H(+). The protein operates within amino-acid biosynthesis; L-isoleucine biosynthesis; L-isoleucine from 2-oxobutanoate: step 2/4. Its pathway is amino-acid biosynthesis; L-valine biosynthesis; L-valine from pyruvate: step 2/4. Functionally, involved in the biosynthesis of branched-chain amino acids (BCAA). Catalyzes an alkyl-migration followed by a ketol-acid reduction of (S)-2-acetolactate (S2AL) to yield (R)-2,3-dihydroxy-isovalerate. In the isomerase reaction, S2AL is rearranged via a Mg-dependent methyl migration to produce 3-hydroxy-3-methyl-2-ketobutyrate (HMKB). In the reductase reaction, this 2-ketoacid undergoes a metal-dependent reduction by NADPH to yield (R)-2,3-dihydroxy-isovalerate. The protein is Ketol-acid reductoisomerase (NADP(+)) of Sulfolobus acidocaldarius (strain ATCC 33909 / DSM 639 / JCM 8929 / NBRC 15157 / NCIMB 11770).